A 210-amino-acid polypeptide reads, in one-letter code: Peroxiredoxin-5, mitochondrial (210 aa).

A mitochondrion-targeting transit peptide spans 1 to 48 (MLQLGLRVLGCKASSVLRASTCLAGRAGRKEAGWECGGARSFSSSAVT). The Thioredoxin domain maps to 52–210 (IKVGDAIPSV…SLAPNILSQL (159 aa)). An N6-acetyllysine; alternate modification is found at Lys-70. Lys-70 is subject to N6-succinyllysine; alternate. Lys-71 carries the post-translational modification N6-acetyllysine. An N6-acetyllysine; alternate modification is found at Lys-79. N6-succinyllysine; alternate is present on Lys-79. The active-site Cysteine sulfenic acid (-SOH) intermediate is Cys-96. Residue Cys-96 is the site of S-palmitoyl cysteine attachment. Cys-96 and Cys-200 form a disulfide bridge. Lys-112 is modified (N6-succinyllysine). Phosphoserine is present on residues Ser-167 and Ser-178. The Microbody targeting signal motif lies at 208-210 (SQL).

It belongs to the peroxiredoxin family. Prx5 subfamily. In terms of assembly, monomer. S-palmitoylated. Palmitoylation occurs on the active site, inhibiting its reactivity; therefore PRDX5 palmitoylation status determines its antioxidant capacity. Post-translationally, S-palmitoylated. Depalmitoylated by ABHD10. Widely expressed.

The protein resides in the mitochondrion. It localises to the cytoplasm. The protein localises to the peroxisome matrix. The catalysed reaction is a hydroperoxide + [thioredoxin]-dithiol = an alcohol + [thioredoxin]-disulfide + H2O. In terms of biological role, thiol-specific peroxidase that catalyzes the reduction of hydrogen peroxide and organic hydroperoxides to water and alcohols, respectively. Plays a role in cell protection against oxidative stress by detoxifying peroxides and as sensor of hydrogen peroxide-mediated signaling events. The protein is Peroxiredoxin-5, mitochondrial of Mus musculus (Mouse).